A 387-amino-acid polypeptide reads, in one-letter code: RNA polymerase II elongation factor ELL3 (387 aa).

Disordered regions lie at residues 127–148 (LTEG…EGHP) and 186–275 (LSNR…EEVP). Residues 230–239 (SPLQGLSNQD) are compositionally biased toward polar residues. Ser240 is subject to Phosphoserine. Positions 240–251 (SPEEQDWGQDAD) are enriched in acidic residues. A compositionally biased stretch (low complexity) spans 257 to 271 (EQSLSVQSASESPSP). The region spanning 275-385 (PDYLLQYSTI…LILEFEEKNR (111 aa)) is the OCEL domain.

Belongs to the ELL/occludin family. As to quaternary structure, interacts with AFF4. Component of the super elongation complex (SEC), at least composed of EAF1, EAF2, CDK9, MLLT3/AF9, AFF (AFF1 or AFF4), the P-TEFb complex and ELL (ELL, ELL2 or ELL3). Component of the little elongation complex (LEC), at least composed of ELL (ELL, ELL2 or ELL3), ZC3H8, ICE1 and ICE2.

The protein resides in the nucleus. In terms of biological role, enhancer-binding elongation factor that specifically binds enhancers in embryonic stem cells (ES cells), marks them, and is required for their future activation during stem cell specification. Elongation factor component of the super elongation complex (SEC), a complex required to increase the catalytic rate of RNA polymerase II transcription by suppressing transient pausing by the polymerase at multiple sites along the DNA. Component of the little elongation complex (LEC), a complex required to regulate small nuclear RNA (snRNA) gene transcription by RNA polymerase II and III. Does not only bind to enhancer regions of active genes, but also marks the enhancers that are in a poised or inactive state in ES cells and is required for establishing proper RNA polymerase II occupancy at developmentally regulated genes in a cohesin-dependent manner. Probably required for priming developmentally regulated genes for later recruitment of the super elongation complex (SEC), for transcriptional activation during differentiation. Required for recruitment of P-TEFb within SEC during differentiation. Probably preloaded on germ cell chromatin, suggesting that it may prime gene activation by marking enhancers as early as in the germ cells. Promoting epithelial-mesenchymal transition (EMT). In Rattus norvegicus (Rat), this protein is RNA polymerase II elongation factor ELL3 (Ell3).